The following is a 457-amino-acid chain: DDB1- and CUL4-associated factor 10 (457 aa).

WD repeat units follow at residues 65–104 (RTHG…HIKT), 108–146 (AHED…SKVC), 150–189 (GHTS…EDGC), and 195–234 (FHTR…KSLE). The segment covering 246-265 (TASTSDMTSTSSDTRPSSSP) has biased composition (low complexity). The disordered stretch occupies residues 246-304 (TASTSDMTSTSSDTRPSSSPCHNSDLGPLFEKHMSRSSQREGASPRNSLEVLTPEVPGE). Residues 281 to 292 (RSSQREGASPRN) show a composition bias toward polar residues. 3 WD repeats span residues 306-346 (DRGN…QEGA), 368-406 (VGRG…KELV), and 424-457 (SHKD…QPKF).

It belongs to the WD repeat DCAF10 family.

The protein operates within protein modification; protein ubiquitination. In terms of biological role, may function as a substrate receptor for CUL4-DDB1 E3 ubiquitin-protein ligase complex. In Xenopus tropicalis (Western clawed frog), this protein is DDB1- and CUL4-associated factor 10 (dcaf10).